A 143-amino-acid chain; its full sequence is Nucleoside diphosphate kinase (143 aa).

Positions 11, 59, 87, 93, 104, and 114 each coordinate ATP. H117 functions as the Pros-phosphohistidine intermediate in the catalytic mechanism.

It belongs to the NDK family. In terms of assembly, homotetramer. Mg(2+) serves as cofactor.

The protein resides in the cytoplasm. The catalysed reaction is a 2'-deoxyribonucleoside 5'-diphosphate + ATP = a 2'-deoxyribonucleoside 5'-triphosphate + ADP. It catalyses the reaction a ribonucleoside 5'-diphosphate + ATP = a ribonucleoside 5'-triphosphate + ADP. Its function is as follows. Major role in the synthesis of nucleoside triphosphates other than ATP. The ATP gamma phosphate is transferred to the NDP beta phosphate via a ping-pong mechanism, using a phosphorylated active-site intermediate. The chain is Nucleoside diphosphate kinase from Pseudomonas aeruginosa (strain UCBPP-PA14).